The sequence spans 1025 residues: Complement receptor type 2 (1025 aa).

The N-terminal stretch at 1 to 11 (MLTWFLFYFSE) is a signal peptide. The Sushi 1 domain maps to 12 to 75 (ISCDPPPEVK…WDKAPPICES (64 aa)). Topologically, residues 12 to 963 (ISCDPPPEVK…PLALCKYRRW (952 aa)) are extracellular. 2 cysteine pairs are disulfide-bonded: Cys-14–Cys-56 and Cys-42–Cys-73. N-linked (GlcNAc...) asparagine glycans are attached at residues Asn-77 and Asn-113. Sushi domains follow at residues 80–140 (ISCS…VCES), 144–204 (LECP…TCKE), 205–265 (AQCE…VCKE), 266–336 (ILCP…YCVL), 341–400 (VLCL…VCEK), 401–460 (GCQA…QCTV), 461–516 (AECK…LCKE), 517–587 (ITCP…LCKL), 592–651 (VQCT…LCKK), 652–706 (EGCE…VCTV), 707–771 (ILCQ…QCLQ), 776–835 (THCP…TCIR), 839–899 (LGCQ…FCKE), and 900–960 (VNCS…LCKY). 26 disulfide bridges follow: Cys-82–Cys-124, Cys-110–Cys-138, Cys-146–Cys-189, Cys-175–Cys-202, Cys-207–Cys-248, Cys-234–Cys-263, Cys-268–Cys-317, Cys-297–Cys-334, Cys-343–Cys-385, Cys-371–Cys-398, Cys-402–Cys-445, Cys-431–Cys-458, Cys-463–Cys-501, Cys-487–Cys-514, Cys-519–Cys-568, Cys-548–Cys-585, Cys-594–Cys-636, Cys-622–Cys-649, Cys-654–Cys-689, Cys-675–Cys-704, Cys-709–Cys-752, Cys-738–Cys-769, Cys-778–Cys-820, Cys-806–Cys-833, Cys-841–Cys-884, and Cys-870–Cys-897. N-linked (GlcNAc...) asparagine glycans are attached at residues Asn-276, Asn-316, Asn-364, and Asn-380. Asn-484 carries N-linked (GlcNAc...) asparagine glycosylation. N-linked (GlcNAc...) asparagine glycosylation is present at Asn-527. 2 N-linked (GlcNAc...) asparagine glycosylation sites follow: Asn-615 and Asn-639. Asn-694 is a glycosylation site (N-linked (GlcNAc...) asparagine). 5 N-linked (GlcNAc...) asparagine glycosylation sites follow: Asn-754, Asn-790, Asn-813, Asn-823, and Asn-851. An N-linked (GlcNAc...) asparagine glycan is attached at Asn-901. 2 disulfide bridges follow: Cys-902/Cys-945 and Cys-931/Cys-958. Residues 964-990 (STIPLICGISVGSALIILMSVGFCMIL) form a helical membrane-spanning segment. At 991 to 1025 (KHRESNYYTKTRPKEGALHLETREVYSIDPYNPAS) the chain is on the cytoplasmic side.

This sequence belongs to the receptors of complement activation (RCA) family. As to quaternary structure, interacts (via Sushi domain 1 and 2) with C3. Interacts with CD19. Part of a complex composed of CD19, CR2/CD21, CD81 and IFITM1/CD225 in the membrane of mature B-cells. Interacts (via Sushi domain 1 and 2) with FCER2 (via the C-terminus). Interacts with CD23. Interacts with FCRL5. Interacts with CR1. Interacts with INFNA1. As to expression, B-lymphocytes.

The protein resides in the cell membrane. Its function is as follows. Serves as a receptor for various ligands including complement component CD3d, HNRNPU OR IFNA1. When C3d is bound to antigens, attaches to C3d on B-cell surface and thereby facilitates the recognition and uptake of antigens by B-cells. This interaction enhances B-cell activation and subsequent immune responses. Forms a complex with several partners on the surface of B-cells including CD19, FCRL5 and CD81, to form the B-cell coreceptor complex that plays a crucial role in B-cell activation and signaling. Also induces specific intracellular signaling separately from the BCR and CD19 by activating the tyrosine kinase SRC, which then phosphorylates nucleolin/NCL and triggers AKT and GSK3 kinase activities in a SYK/CD19-independent manner. Acts as a ligand for CD23 (FcepsilonRII), a low-affinity receptor for IgE, which is expressed on B-cells and other immune cells, and thus participates in the regulation of IgE production. The chain is Complement receptor type 2 (Cr2) from Mus musculus (Mouse).